Here is a 430-residue protein sequence, read N- to C-terminus: Probable sugar isomerase R00627 (430 aa).

Mn(2+) is bound by residues H257, D289, and D291.

Belongs to the rhamnose isomerase family. Requires Mn(2+) as cofactor.

This is Probable sugar isomerase R00627 from Rhizobium meliloti (strain 1021) (Ensifer meliloti).